We begin with the raw amino-acid sequence, 332 residues long: MKVTFEQLKEAFNRVLLDACVARETADACAEMFARTTESGVYSHGVNRFPRFIQQLDNGDIIPEAQPQRVTTLGAIEQWDAQRSIGNLTAKKMMDRAIELASDHGIGLVALRNANHWMRGGSYGWQAAEKGYIGICWTNSIAVMAPWGAKECRIGTNPLIVAIPSTPITMVDMSMSMFSYGMLEVNRLAGRELPVDGGFDDDGRLTKEPGTIEKNRRILPMGYWKGSGLSIVLDMIATLLSNGSSVAEVTQENSDEYGVSQIFIAIEVDKLIDGATRDAKLQRIMDFITTAERADENVAVRLPGHEFTRLLDENRRNGITVDDSVWAKIQAL.

Residue His-44 is the Proton donor of the active site. Residues 168–174 (ITMVDMS), 224–225 (WK), and 304–306 (GHE) contribute to the NAD(+) site.

This sequence belongs to the LDH2/MDH2 oxidoreductase family. DlgD subfamily. As to quaternary structure, homodimer.

The protein localises to the cytoplasm. The enzyme catalyses 3-dehydro-L-gulonate + NAD(+) = 2,3-dioxo-L-gulonate + NADH + H(+). It catalyses the reaction 3-dehydro-L-gulonate + NADP(+) = 2,3-dioxo-L-gulonate + NADPH + H(+). Its function is as follows. Catalyzes the reduction of 2,3-diketo-L-gulonate in the presence of NADH, to form 3-keto-L-gulonate. The sequence is that of 2,3-diketo-L-gulonate reductase from Klebsiella oxytoca.